Here is a 319-residue protein sequence, read N- to C-terminus: Transcriptional regulator LsrR (319 aa).

Residues 32–55 (QSEISERLGLTRLKVSRLLEKGHQ) constitute a DNA-binding region (H-T-H motif).

Belongs to the SorC transcriptional regulatory family.

It is found in the cytoplasm. With respect to regulation, inactivated by phosphorylated autoinducer-2 (phospho-AI-2). Phospho-AI-2 acts by binding to LsrR, which is then unable to bind to the promoter regions, allowing the transcription of the target genes. Functionally, transcriptional regulator that represses the expression of the lsr operon (lsrACDBFGE) in the absence of the quorum-sensing signaling molecule autoinducer 2 (AI-2). It also represses the expression of the lsrRK operon. Acts by binding to the intergenic region between the lsr operon and lsrR. In the presence of phosphorylated autoinducer-2 (phospho-AI-2), LsrR is inactivated, leading to the transcription of the genes. The regulatory function of LsrR was thought to be limited to the lsr operon, but it was subsequently shown to be involved, directly or indirectly, in the regulation of SPI-1 and flagella genes. It negatively regulates the expression of those genes, which reduces the ability of Salmonella to invade host cells. This is Transcriptional regulator LsrR from Salmonella typhimurium (strain LT2 / SGSC1412 / ATCC 700720).